The primary structure comprises 187 residues: Small ribosomal subunit protein uS5 (187 aa).

The S5 DRBM domain maps to 21-84 (MVDKLVHINR…ESAKRDMIFV (64 aa)).

The protein belongs to the universal ribosomal protein uS5 family. Part of the 30S ribosomal subunit. Contacts proteins S4 and S8.

In terms of biological role, with S4 and S12 plays an important role in translational accuracy. Functionally, located at the back of the 30S subunit body where it stabilizes the conformation of the head with respect to the body. This chain is Small ribosomal subunit protein uS5, found in Mesorhizobium japonicum (strain LMG 29417 / CECT 9101 / MAFF 303099) (Mesorhizobium loti (strain MAFF 303099)).